The following is a 360-amino-acid chain: Phospho-N-acetylmuramoyl-pentapeptide-transferase (360 aa).

10 helical membrane passes run 27–47, 72–92, 94–114, 132–152, 168–188, 199–219, 236–256, 263–283, 288–308, and 338–358; these read IVSLLTALFISLWMGPRLIGW, PTMGGLMILTSITISVLMWAY, SNPYVWCVLFVLLGYGIVGFV, WKYFWQSVIALVVAFTMYCIG, IMPQLGLLYILLSYFVIVGTS, GLAIMPTVFVAAGMGLVAWAT, AGELVIVCTAIVGAGLGFLWF, VFMGDVGSLALGGALGTIAVL, FLLVIMGGVFVMETLSVILQV, and VIVRFWIISLMLVLIGLATLK.

The protein belongs to the glycosyltransferase 4 family. MraY subfamily. It depends on Mg(2+) as a cofactor.

Its subcellular location is the cell inner membrane. It catalyses the reaction UDP-N-acetyl-alpha-D-muramoyl-L-alanyl-gamma-D-glutamyl-meso-2,6-diaminopimeloyl-D-alanyl-D-alanine + di-trans,octa-cis-undecaprenyl phosphate = di-trans,octa-cis-undecaprenyl diphospho-N-acetyl-alpha-D-muramoyl-L-alanyl-D-glutamyl-meso-2,6-diaminopimeloyl-D-alanyl-D-alanine + UMP. Its pathway is cell wall biogenesis; peptidoglycan biosynthesis. Functionally, catalyzes the initial step of the lipid cycle reactions in the biosynthesis of the cell wall peptidoglycan: transfers peptidoglycan precursor phospho-MurNAc-pentapeptide from UDP-MurNAc-pentapeptide onto the lipid carrier undecaprenyl phosphate, yielding undecaprenyl-pyrophosphoryl-MurNAc-pentapeptide, known as lipid I. The chain is Phospho-N-acetylmuramoyl-pentapeptide-transferase from Edwardsiella ictaluri (strain 93-146).